Here is a 525-residue protein sequence, read N- to C-terminus: MLGKRKRVVLTIKDKLDIIKKLEEGNSFKKLSVLYGIGESTVRDIKKNKERIINYANSSDPTSGVSKRKSMKSSTYEELDRVMIEWFNQQKTDGIPVSGTICAKQARFFFDALGMEGDFNASSGWLTRFKQRHGIPKAAGKGTKLKGDETAASEFCGNFQEFVERENLLPEQIYGADQTGLFWKCLPTRTLAFDTDQSTCEYRTSRERIIIMCCANATGSHKLNLCVVGKAKRPRAFKGTDLSNLPVTYFSQKSAWIEPSVLKQWFEKCFVPQVQKHLKSKGLREKAVLLLDFPAAHPAEELLSSDDGRIIVKYLPPNVTSLIQPMSQGVLTTVKRYYRAGLIQKYMDEGNDPKTFWKNLTVLDAIYEASRAWNQIRSNTITRAWKKLFPGNEENPSVSIDEGAILAANLATVLQNTEDCEHVNIENIEQWFDSRSSGSNCQVLADIVGAADRAKVTEQKPSRKTRKAELNPEKHISHKAALEWTENLLDYLEQQDDMLLSDKLVLRRLRTIIRRKQRIQNKSHL.

The HTH psq-type domain occupies 1 to 52 (MLGKRKRVVLTIKDKLDIIKKLEEGNSFKKLSVLYGIGESTVRDIKKNKERI). 2 consecutive DNA-binding regions (H-T-H motif) follow at residues 28–48 (FKKL…IKKN) and 100–132 (TICA…FKQR). Residues 67-139 (KRKSMKSSTY…KQRHGIPKAA (73 aa)) form the HTH CENPB-type domain. The DDE-1 domain occupies 168–385 (LLPEQIYGAD…IRSNTITRAW (218 aa)).

It belongs to the tigger transposable element derived protein family.

It localises to the nucleus. The sequence is that of Tigger transposable element-derived protein 2 (Tigd2) from Mus musculus (Mouse).